The chain runs to 385 residues: Homoserine O-succinyltransferase (385 aa).

The AB hydrolase-1 domain maps to 46 to 355 (NAILICHALS…NSQHGHDAFL (310 aa)). Catalysis depends on Ser-151, which acts as the Nucleophile. Arg-221 lines the substrate pocket. Residues Asp-318 and His-351 contribute to the active site. Substrate is bound at residue Asp-352.

This sequence belongs to the AB hydrolase superfamily. MetX family. In terms of assembly, homodimer.

Its subcellular location is the cytoplasm. The catalysed reaction is L-homoserine + succinyl-CoA = O-succinyl-L-homoserine + CoA. It participates in amino-acid biosynthesis; L-methionine biosynthesis via de novo pathway; O-succinyl-L-homoserine from L-homoserine: step 1/1. Transfers a succinyl group from succinyl-CoA to L-homoserine, forming succinyl-L-homoserine. This Hydrogenovibrio crunogenus (strain DSM 25203 / XCL-2) (Thiomicrospira crunogena) protein is Homoserine O-succinyltransferase.